We begin with the raw amino-acid sequence, 469 residues long: Glutamine synthetase (469 aa).

A GS beta-grasp domain is found at 13-97 (NEVKFVDLRF…IRCDILEPAT (85 aa)). Residues 105 to 469 (PRSIAKRAEE…PLEFELYYSV (365 aa)) form the GS catalytic domain. Residues glutamate 130 and glutamate 132 each coordinate Mg(2+). Residue glutamate 208 participates in ATP binding. Glutamate 213 and glutamate 221 together coordinate Mg(2+). Residues 265–266 (NG) and glycine 266 each bind L-glutamate. Histidine 270 provides a ligand contact to Mg(2+). ATP contacts are provided by residues 272-274 (HQS) and serine 274. The L-glutamate site is built by arginine 322, glutamate 328, and arginine 340. The ATP site is built by arginine 340, arginine 345, and lysine 353. Glutamate 358 contacts Mg(2+). An L-glutamate-binding site is contributed by arginine 360. The residue at position 398 (tyrosine 398) is an O-AMP-tyrosine.

It belongs to the glutamine synthetase family. As to quaternary structure, oligomer of 12 subunits arranged in the form of two hexameric ring. Mg(2+) is required as a cofactor.

Its subcellular location is the cytoplasm. It catalyses the reaction L-glutamate + NH4(+) + ATP = L-glutamine + ADP + phosphate + H(+). The activity of this enzyme could be controlled by adenylation under conditions of abundant glutamine. In terms of biological role, catalyzes the ATP-dependent biosynthesis of glutamine from glutamate and ammonia. The polypeptide is Glutamine synthetase (glnAv) (Vibrio cholerae serotype O1 (strain ATCC 39315 / El Tor Inaba N16961)).